The following is a 248-amino-acid chain: PF03932 family protein CutC (248 aa).

It belongs to the CutC family. In terms of assembly, homodimer.

The protein resides in the cytoplasm. The protein is PF03932 family protein CutC of Shigella boydii serotype 18 (strain CDC 3083-94 / BS512).